Consider the following 471-residue polypeptide: Ribosomal protein uS12 methylthiotransferase RimO (471 aa).

The region spanning 2–122 is the MTTase N-terminal domain; it reads IKVSLISLGC…VAPIIQEIYA (121 aa). Residues C11, C47, C84, C166, C170, and C173 each contribute to the [4Fe-4S] cluster site. The Radical SAM core domain maps to 152–395; it reads LTPKHFAYVK…MALQKQIAAD (244 aa). Residues 398–458 form the TRAM domain; the sequence is KTYVGRTLRV…DYDLLALPPG (61 aa).

This sequence belongs to the methylthiotransferase family. RimO subfamily. [4Fe-4S] cluster is required as a cofactor.

The protein resides in the cytoplasm. The enzyme catalyses L-aspartate(89)-[ribosomal protein uS12]-hydrogen + (sulfur carrier)-SH + AH2 + 2 S-adenosyl-L-methionine = 3-methylsulfanyl-L-aspartate(89)-[ribosomal protein uS12]-hydrogen + (sulfur carrier)-H + 5'-deoxyadenosine + L-methionine + A + S-adenosyl-L-homocysteine + 2 H(+). Its function is as follows. Catalyzes the methylthiolation of an aspartic acid residue of ribosomal protein uS12. This chain is Ribosomal protein uS12 methylthiotransferase RimO, found in Opitutus terrae (strain DSM 11246 / JCM 15787 / PB90-1).